The sequence spans 387 residues: Methionine aminopeptidase 1 (387 aa).

Ser2 is subject to N-acetylserine. Residues 2–10 (STATTTVTT) constitute a propeptide that is removed on maturation. The segment at 19-73 (KIYCSGLQCGRETSSQMKCPVCLKQGIVSIFCDTSCYENNYKAHKALHNAKDGLE) adopts a C6H2-type zinc-finger fold. Residues Cys22, Cys27, Cys37, Cys40, Cys50, Cys54, His62, and His66 each contribute to the Zn(2+) site. His202 is an a protein binding site. Residues Asp219, Asp230, and His294 each coordinate Zn(2+). His301 contacts a protein. 2 residues coordinate Zn(2+): Glu327 and Glu358.

It belongs to the peptidase M24A family. Methionine aminopeptidase type 1 subfamily. Associates with the 60S ribosomal subunit of the 80S translational complex. Requires Zn(2+) as cofactor. The cofactor is Co(2+). It depends on Mn(2+) as a cofactor. Fe(2+) is required as a cofactor.

It is found in the cytoplasm. It carries out the reaction Release of N-terminal amino acids, preferentially methionine, from peptides and arylamides.. With respect to regulation, in contract to the MetAP 2 isoform, is not inhibited by the fungal metabolite fumagillin, an antiangiogenic drug. Functionally, cotranslationally removes the N-terminal methionine from nascent proteins. The N-terminal methionine is often cleaved when the second residue in the primary sequence is small and uncharged (Met-Ala-, Cys, Gly, Pro, Ser, Thr, or Val). Plays the major role in N-terminal methionine removal. Less efficient when the second residue is Val. The sequence is that of Methionine aminopeptidase 1 (MAP1) from Saccharomyces cerevisiae (strain ATCC 204508 / S288c) (Baker's yeast).